We begin with the raw amino-acid sequence, 237 residues long: rRNA-processing protein EFG1 (237 aa).

Positions 1 to 24 (MPKTVKNPKNNKSRSRGAPIQVAE) are disordered. Coiled-coil stretches lie at residues 53-113 (DKKI…ISQT) and 166-186 (LKIT…LMEE). The interval 206–237 (NDKTQKAVLTEEIDAPEQKQDEQQEEQDDFFE) is disordered. Positions 228–237 (QQEEQDDFFE) are enriched in acidic residues.

This sequence belongs to the EFG1 family.

Its subcellular location is the nucleus. It localises to the nucleolus. Its function is as follows. Involved in rRNA processing. In Candida albicans (strain SC5314 / ATCC MYA-2876) (Yeast), this protein is rRNA-processing protein EFG1.